We begin with the raw amino-acid sequence, 242 residues long: Protein LST7 (242 aa).

One can recognise a uDENN FLCN/SMCR8-type domain in the interval 48–212 (SCLLQFPEES…NKSKFGRNLV (165 aa)).

Functionally, required for the nitrogen-regulated transport of amino acid permeases GAP1 and PUT4 from the Golgi to the cell surface. The protein is Protein LST7 (LST7) of Saccharomyces cerevisiae (strain ATCC 204508 / S288c) (Baker's yeast).